The primary structure comprises 580 residues: Nuclear body protein SP140-like protein (580 aa).

The HSR domain occupies 33–149 (SLQRLFTEDQ…IYKSFKNAIQ (117 aa)). The segment at 155–293 (QESDRKEREE…RSRASRKHKD (139 aa)) is disordered. Basic and acidic residues predominate over residues 156–170 (ESDRKEREERPDIKL). Lys-169 is covalently cross-linked (Glycyl lysine isopeptide (Lys-Gly) (interchain with G-Cter in SUMO2)). Ser-180 carries the post-translational modification Phosphoserine. Over residues 207-219 (KPKRKRRKKKGHG) the composition is skewed to basic residues. Over residues 224 to 236 (GTRTQKNNQQNDN) the composition is skewed to polar residues. The segment covering 280–290 (QKRVRSRASRK) has biased composition (basic residues). A Glycyl lysine isopeptide (Lys-Gly) (interchain with G-Cter in SUMO2) cross-link involves residue Lys-292. The SAND domain maps to 293–374 (DETVDFQAPL…RRLMEEGSLP (82 aa)). The PHD-type zinc finger occupies 403–449 (LDECEVCRDGGELFCCDTCSRVFHEDCHIPPVESEKTPWNCIFCRMK). The Bromo domain occupies 467–570 (QMCPEEQLKC…AEFEKDFKEV (104 aa)).

This chain is Nuclear body protein SP140-like protein (SP140L), found in Homo sapiens (Human).